The following is a 919-amino-acid chain: Kinesin-like protein KIN-UA (919 aa).

The tract at residues 1 to 68 is disordered; it reads MSTTSGTGGV…SGGGGDAGVP (68 aa). Positions 15-51 are enriched in low complexity; it reads GTQRSSLRTQSSASTSSGGQKASVKSKSVLRKSSPAA. The span at 52 to 66 shows a compositional bias: gly residues; it reads LGGGSSKSGGGGDAG. In terms of domain architecture, Kinesin motor spans 70 to 412; it reads RVRVAVRLRP…IMFGQRAMKV (343 aa). 155 to 162 is an ATP binding site; that stretch reads GQTGTGKT. The tract at residues 286–305 is disordered; that stretch reads TRDGLSSESNGNSHMTKSLK. Over residues 291–301 the composition is skewed to polar residues; the sequence is SSESNGNSHMT. The D-BOX motif lies at 382 to 390; sequence RTSLVITIG. 2 coiled-coil regions span residues 428–492 and 530–621; these read SRRL…SIKK and ALEE…LEQH. 4 ARM repeats span residues 650–689, 691–731, 733–773, and 775–814; these read KPPV…NLAA, EANQ…NLAM, ETNQ…NLCG, and DKLQ…NFAK.

The protein belongs to the TRAFAC class myosin-kinesin ATPase superfamily. Kinesin family. Ungrouped subfamily. Interacts (via C-terminus) with NEK5. In terms of tissue distribution, expressed in leaves, guard cells, trichomes, vascular tissues, stele of the root tip region and columella cells. Highest expression detected in guard cells.

Its subcellular location is the cytoplasm. The protein resides in the cytoskeleton. The polypeptide is Kinesin-like protein KIN-UA (Arabidopsis thaliana (Mouse-ear cress)).